The primary structure comprises 91 residues: Teretoxin Tan22.13 (91 aa).

A signal peptide spans 1–21; that stretch reads MKVQILFALMMVLVTLCLGQK. The propeptide occupies 22–24; sequence MQR.

It belongs to the teretoxin C (TC) superfamily. Contains 4 disulfide bonds. As to expression, expressed by the venom duct.

The protein localises to the secreted. The chain is Teretoxin Tan22.13 from Terebra anilis (Auger snail).